The following is a 50-amino-acid chain: uncharacterized protein (50 aa).

The disordered stretch occupies residues 28–50 (SKLSPVTNGGKTIGKSNKVSKND). Residues 29–50 (KLSPVTNGGKTIGKSNKVSKND) show a composition bias toward polar residues.

This is an uncharacterized protein from Haemophilus influenzae (strain ATCC 51907 / DSM 11121 / KW20 / Rd).